The primary structure comprises 121 residues: Flagellar protein FliT (121 aa).

The tract at residues 1 to 50 (MNHAPHLYFAWQQLVEKSQLMLRLATEEQWDELIASEMAYVNAVQEIAHL) is required for homodimerization. Residues 60–98 (MQEQLRPMLRLILDNESKVKQLLQIRMDELAKLVGQSSV) are fliD binding.

Belongs to the FliT family. As to quaternary structure, homodimer. Interacts with FliD and FlhC.

The protein localises to the cytoplasm. It localises to the cytosol. Dual-function protein that regulates the transcription of class 2 flagellar operons and that also acts as an export chaperone for the filament-capping protein FliD. As a transcriptional regulator, acts as an anti-FlhDC factor; it directly binds FlhC, thus inhibiting the binding of the FlhC/FlhD complex to class 2 promoters, resulting in decreased expression of class 2 flagellar operons. As a chaperone, effects FliD transition to the membrane by preventing its premature polymerization, and by directing it to the export apparatus. The polypeptide is Flagellar protein FliT (Escherichia coli O157:H7).